The following is a 498-amino-acid chain: 3-octaprenyl-4-hydroxybenzoate carboxy-lyase (498 aa).

Mn(2+) is bound at residue N177. Residues I180–R182, R194–L196, and R199–G200 contribute to the prenylated FMN site. E243 is a binding site for Mn(2+). The Proton donor role is filled by D292.

It belongs to the UbiD family. Homohexamer. It depends on prenylated FMN as a cofactor. Mn(2+) serves as cofactor.

It localises to the cell membrane. The enzyme catalyses a 4-hydroxy-3-(all-trans-polyprenyl)benzoate + H(+) = a 2-(all-trans-polyprenyl)phenol + CO2. It functions in the pathway cofactor biosynthesis; ubiquinone biosynthesis. Catalyzes the decarboxylation of 3-octaprenyl-4-hydroxy benzoate to 2-octaprenylphenol, an intermediate step in ubiquinone biosynthesis. This Methylococcus capsulatus (strain ATCC 33009 / NCIMB 11132 / Bath) protein is 3-octaprenyl-4-hydroxybenzoate carboxy-lyase.